The primary structure comprises 620 residues: Glutathione-regulated potassium-efflux system protein KefC (620 aa).

12 helical membrane passes run 4-24 (HTLLQALIYLGSAALIVPIAV), 26-46 (LGLGSVLGYLIAGCIIGPWGL), 54-74 (SILHFAEIGVVLMLFVIGLEL), 90-110 (GALQMVVCGGLIGLFCMFLGL), 114-134 (VAELIGMTLALSSTAIAMQAM), 149-169 (FAVLLFQDIAAIPLVAMIPLL), 178-198 (LGAFALSALKVAGALALVVLL), 218-238 (VFSAVALFLVFGFGLLLEEVG), 270-290 (GLLLGLFFIGVGMSIDFGTLV), 294-314 (LRILLLLAGFLAIKIVMLWLV), 327-347 (WFAVLLGQGSEFAFVVFGAAQ), and 359-379 (ALTLAVALSMAATPIFLVLLT). Positions 399-518 (QPRVIVAGFG…AGVAMPERET (120 aa)) constitute an RCK N-terminal domain. The tract at residues 599 to 620 (QGTAEGKHSGEVADEPEVKPSI) is disordered.

Belongs to the monovalent cation:proton antiporter 2 (CPA2) transporter (TC 2.A.37) family. KefC subfamily. As to quaternary structure, homodimer. Interacts with the regulatory subunit KefF.

The protein resides in the cell inner membrane. Its function is as follows. Pore-forming subunit of a potassium efflux system that confers protection against electrophiles. Catalyzes K(+)/H(+) antiport. In Salmonella agona (strain SL483), this protein is Glutathione-regulated potassium-efflux system protein KefC.